The sequence spans 686 residues: Leucine-rich repeat-containing protein 49 (686 aa).

LRR repeat units follow at residues 113-134 (HLRL…SNLQ), 135-156 (KLIS…STLR), 157-178 (CLRV…ENLK), 179-200 (SLDV…NHLC), 201-222 (ELRV…NGLD), 223-244 (SLTE…DNLP), and 245-266 (CLQH…SCLA). The region spanning 279–317 (NPIAQESWYKHTVLQNMMQLRQLDMKRITEEERRMASVL) is the LRRCT domain. Positions 303–341 (MKRITEEERRMASVLAKKEEEKKRESHKQSLLKEKKRLT) form a coiled coil. Residues 360–388 (ATNEDRKDSDSPQDPCQIDGSTLSAFPEE) form a disordered region.

Part of the neuronal tubulin polyglutamylase complex which contains TPGS1, TPGS2, TTLL1, LRRC49 and NICN1. Interacts with PCM1; TTLL1, TPGS1, TPGS2 and LRRC49.

It localises to the cytoplasm. It is found in the cytoskeleton. The protein resides in the microtubule organizing center. Its subcellular location is the centrosome. The protein localises to the centriolar satellite. Functionally, subunit of the tubulin polyglutamylase complex (TPGC). The complex mediates cilia and flagella polyglutamylation which is essential for their biogenesis and motility. This Homo sapiens (Human) protein is Leucine-rich repeat-containing protein 49.